The sequence spans 223 residues: Deoxyribose-phosphate aldolase (223 aa).

Asp-89 serves as the catalytic Proton donor/acceptor. Residue Lys-154 is the Schiff-base intermediate with acetaldehyde of the active site. Lys-183 functions as the Proton donor/acceptor in the catalytic mechanism.

Belongs to the DeoC/FbaB aldolase family. DeoC type 1 subfamily.

It localises to the cytoplasm. It catalyses the reaction 2-deoxy-D-ribose 5-phosphate = D-glyceraldehyde 3-phosphate + acetaldehyde. It functions in the pathway carbohydrate degradation; 2-deoxy-D-ribose 1-phosphate degradation; D-glyceraldehyde 3-phosphate and acetaldehyde from 2-deoxy-alpha-D-ribose 1-phosphate: step 2/2. Its function is as follows. Catalyzes a reversible aldol reaction between acetaldehyde and D-glyceraldehyde 3-phosphate to generate 2-deoxy-D-ribose 5-phosphate. This is Deoxyribose-phosphate aldolase from Thermoanaerobacter pseudethanolicus (strain ATCC 33223 / 39E) (Clostridium thermohydrosulfuricum).